A 92-amino-acid polypeptide reads, in one-letter code: Alpha-conotoxin-like Rt20.2 (92 aa).

Positions 1-24 (MPKLEMMLLVLLILPLSYFSAAGG) are cleaved as a signal peptide. The propeptide occupies 25–45 (QVVQGDLHSDVLARYLQRGDR). Glu-49 bears the 4-carboxyglutamate mark. The residue at position 55 (Pro-55) is a 4-hydroxyproline. Cystine bridges form between Cys-63/Cys-72, Cys-68/Cys-80, Cys-73/Cys-90, and Cys-78/Cys-92.

It belongs to the conotoxin D superfamily. As to quaternary structure, hetero-, homo- or pseudo-homodimer (identical sequence, different post-translational modifications). Expressed by the venom duct.

Its subcellular location is the secreted. Alpha-conotoxins act on postsynaptic membranes, they bind to the nicotinic acetylcholine receptors (nAChR) and thus inhibit them. Through its two C-terminal domains, this homodimeric protein would bind to two nAChR allosteric sites, located outside the nAChR C-loop of the principal binding face and at the adjacent binding interface in a clockwise direction. This toxin specifically blocks mammalian neuronal nAChR of the alpha-7/CHRNA7, alpha-3-beta-2/CHRNA3-CHRNB2 and alpha-4-beta-2/CHRNA4-CHRNB2 subtypes. This is Alpha-conotoxin-like Rt20.2 from Conus rattus (Rat cone).